A 347-amino-acid chain; its full sequence is NADH-ubiquinone oxidoreductase chain 2 (347 aa).

The next 10 membrane-spanning stretches (helical) occupy residues 13 to 33 (IFAGTLITALSSHWFFTWVGL), 56 to 76 (AIKYFLTQATASMILLMAILF), 96 to 116 (LMIMMAMAMKLGMAPFHFWVP), 123 to 143 (PLTSGLLLLTWQKLAPISIMY), 149 to 169 (LNVSLLLTLSILSIMAGSWGG), 178 to 198 (ILAYSSITHMGWMMAVLPYNP), 201 to 221 (TILNLTIYIILTTTAFLLLNL), 247 to 267 (TLLSLGGLPPLTGFLPKWAII), 274 to 294 (NSLIIPTIMATITLLNLYFYL), and 326 to 346 (LPTLIALTTLLLPISPFMLMI).

The protein belongs to the complex I subunit 2 family. In terms of assembly, core subunit of respiratory chain NADH dehydrogenase (Complex I) which is composed of 45 different subunits. Interacts with TMEM242.

Its subcellular location is the mitochondrion inner membrane. The catalysed reaction is a ubiquinone + NADH + 5 H(+)(in) = a ubiquinol + NAD(+) + 4 H(+)(out). Its function is as follows. Core subunit of the mitochondrial membrane respiratory chain NADH dehydrogenase (Complex I) which catalyzes electron transfer from NADH through the respiratory chain, using ubiquinone as an electron acceptor. Essential for the catalytic activity and assembly of complex I. In Homo sapiens (Human), this protein is NADH-ubiquinone oxidoreductase chain 2.